The sequence spans 466 residues: Glutamate decarboxylase (466 aa).

Residue lysine 277 is modified to N6-(pyridoxal phosphate)lysine.

This sequence belongs to the group II decarboxylase family. Pyridoxal 5'-phosphate serves as cofactor.

The enzyme catalyses L-glutamate + H(+) = 4-aminobutanoate + CO2. Converts internalized glutamate to GABA and increases the internal pH. Involved in glutamate-dependent acid resistance. This is Glutamate decarboxylase (gadB) from Lactococcus lactis subsp. lactis (strain IL1403) (Streptococcus lactis).